We begin with the raw amino-acid sequence, 327 residues long: Phenylalanine--tRNA ligase alpha subunit (327 aa).

Glutamate 252 serves as a coordination point for Mg(2+).

This sequence belongs to the class-II aminoacyl-tRNA synthetase family. Phe-tRNA synthetase alpha subunit type 1 subfamily. Tetramer of two alpha and two beta subunits. Mg(2+) is required as a cofactor.

Its subcellular location is the cytoplasm. It catalyses the reaction tRNA(Phe) + L-phenylalanine + ATP = L-phenylalanyl-tRNA(Phe) + AMP + diphosphate + H(+). In Aliivibrio fischeri (strain ATCC 700601 / ES114) (Vibrio fischeri), this protein is Phenylalanine--tRNA ligase alpha subunit.